The primary structure comprises 278 residues: Undecaprenyl-diphosphatase 2 (278 aa).

The next 7 helical transmembrane spans lie at 43–63 (GAAFTAITQIGTEMAVLVYFW), 88–108 (ARLGWLIIVGSVPIVFLGLFF), 119–139 (LYITAVMLIVFGIVLGLADRI), 149–169 (LIWRDGILFGFAQAMALIPGV), 194–214 (FLLAVPAVFGSGFYQLFKSIG), 226–246 (LATLIAFIVGYAVIVVFLKLV), and 254–274 (FVWYRVVIGFILLALLGTGVI).

The protein belongs to the UppP family.

The protein resides in the cell inner membrane. The catalysed reaction is di-trans,octa-cis-undecaprenyl diphosphate + H2O = di-trans,octa-cis-undecaprenyl phosphate + phosphate + H(+). Catalyzes the dephosphorylation of undecaprenyl diphosphate (UPP). Confers resistance to bacitracin. This chain is Undecaprenyl-diphosphatase 2, found in Agrobacterium fabrum (strain C58 / ATCC 33970) (Agrobacterium tumefaciens (strain C58)).